A 109-amino-acid chain; its full sequence is Putative double-stranded DNA mimic protein KPK_2119 (109 aa).

It belongs to the putative dsDNA mimic protein family.

May act as a double-stranded DNA (dsDNA) mimic. Probably regulates the activity of a dsDNA-binding protein. The polypeptide is Putative double-stranded DNA mimic protein KPK_2119 (Klebsiella pneumoniae (strain 342)).